The following is a 127-amino-acid chain: 3-aminoacrylate deaminase RutC (127 aa).

The protein belongs to the RutC family.

The catalysed reaction is (Z)-3-aminoacrylate + H2O + H(+) = 3-oxopropanoate + NH4(+). In terms of biological role, involved in pyrimidine catabolism. Catalyzes the deamination of 3-aminoacrylate to malonic semialdehyde, a reaction that can also occur spontaneously. RutC may facilitate the reaction and modulate the metabolic fitness, rather than catalyzing essential functions. The sequence is that of 3-aminoacrylate deaminase RutC from Pseudomonas syringae pv. syringae (strain B728a).